The primary structure comprises 113 residues: MAIAVGMIETLGFPAVVEAADAMVKAARVTLVGYEKIGSGRVTVIVRGDVSEVQASVAAGVENVKRVNGGQVLSTHIIARPHENLEYVLPIRYTEAVEQFRESVSGIRPMGRP.

Residues 4 to 90 (AVGMIETLGF…PHENLEYVLP (87 aa)) enclose the BMC domain.

This sequence belongs to the bacterial microcompartments protein family. CcmK subfamily. In terms of assembly, homohexamer. Interacts preferentially with CcmK2 and CcmK4a rather than itself in vitro.

The protein resides in the carboxysome. Its function is as follows. One of the shell proteins of the carboxysome, a polyhedral inclusion where RuBisCO (ribulose bisphosphate carboxylase, rbcL-rbcS) is sequestered. Assembles into hexamers which make sheets that form the facets of the polyhedral carboxysome. The hexamer central pore probably regulates metabolite flux. The polypeptide is Carboxysome shell protein CcmK1 (Thermosynechococcus vestitus (strain NIES-2133 / IAM M-273 / BP-1)).